The chain runs to 169 residues: Secretory-abundant heat soluble protein 1 (169 aa).

The first 19 residues, 1-19, serve as a signal peptide directing secretion; that stretch reads MSRAAVAIALLGCVVAAYG. The segment at 31–60 is SAHS-c1; that stretch reads EWTGKSWMGKWESTDRIENFDAFISALGLP. The interval 75–103 is SAHS-c2; it reads WKEGDHYHHQISVPDKNYKNDVNFKLNEE. Residue N109 is glycosylated (N-linked (GlcNAc...) asparagine). The tract at residues 116–165 is SAHS-c3; sequence KYTEDGGNLKAEVHVPSRNKVIHDEYKVNGDELEKTYKVGDVTAKRWYKK.

The protein belongs to the Secretory-abundant heat soluble protein (SAHS) family.

The protein resides in the secreted. Functionally, secreted heat soluble protein acting as a molecular shield in water-deficient condition. Tardigrade-specific intrinsically disordered proteins (TDPs) are essential for desiccation tolerance by forming non-crystalline amorphous solids upon desiccation, and this vitrified state mirrors their protective capabilities. This chain is Secretory-abundant heat soluble protein 1, found in Ramazzottius varieornatus (Water bear).